Reading from the N-terminus, the 78-residue chain is D-alanyl carrier protein (78 aa).

One can recognise a Carrier domain in the interval 1-78 (MAFRENVLEI…MIITQLEALK (78 aa)). Position 36 is an O-(pantetheine 4'-phosphoryl)serine (S36).

It belongs to the DltC family. Post-translationally, 4'-phosphopantetheine is transferred from CoA to a specific serine of apo-DCP.

The protein localises to the cytoplasm. Its pathway is cell wall biogenesis; lipoteichoic acid biosynthesis. Functionally, carrier protein involved in the D-alanylation of lipoteichoic acid (LTA). The loading of thioester-linked D-alanine onto DltC is catalyzed by D-alanine--D-alanyl carrier protein ligase DltA. The DltC-carried D-alanyl group is further transferred to cell membrane phosphatidylglycerol (PG) by forming an ester bond, probably catalyzed by DltD. D-alanylation of LTA plays an important role in modulating the properties of the cell wall in Gram-positive bacteria, influencing the net charge of the cell wall. The protein is D-alanyl carrier protein of Listeria monocytogenes serotype 4a (strain HCC23).